A 610-amino-acid polypeptide reads, in one-letter code: UvrABC system protein C (610 aa).

The region spanning 16–94 is the GIY-YIG domain; sequence SQPGVYRMYD…IKLYQPRYNV (79 aa). Residues 204–239 form the UVR domain; the sequence is DQVLTQLIARMEKASQDLAFEEAARIRDQIQAVRRV.

This sequence belongs to the UvrC family. In terms of assembly, interacts with UvrB in an incision complex.

Its subcellular location is the cytoplasm. Functionally, the UvrABC repair system catalyzes the recognition and processing of DNA lesions. UvrC both incises the 5' and 3' sides of the lesion. The N-terminal half is responsible for the 3' incision and the C-terminal half is responsible for the 5' incision. The sequence is that of UvrABC system protein C from Salmonella schwarzengrund (strain CVM19633).